Consider the following 372-residue polypeptide: Glutamate 5-kinase (372 aa).

An ATP-binding site is contributed by lysine 14. Residues serine 54, aspartate 141, and asparagine 153 each contribute to the substrate site. Position 173–174 (173–174 (TD)) interacts with ATP. A PUA domain is found at 280-358 (RGHVVIDAGA…GEIESVLGYM (79 aa)).

This sequence belongs to the glutamate 5-kinase family.

Its subcellular location is the cytoplasm. It carries out the reaction L-glutamate + ATP = L-glutamyl 5-phosphate + ADP. It functions in the pathway amino-acid biosynthesis; L-proline biosynthesis; L-glutamate 5-semialdehyde from L-glutamate: step 1/2. Its function is as follows. Catalyzes the transfer of a phosphate group to glutamate to form L-glutamate 5-phosphate. The sequence is that of Glutamate 5-kinase from Burkholderia multivorans (strain ATCC 17616 / 249).